The following is a 185-amino-acid chain: Cell wall protein phiA (185 aa).

Residues 1 to 18 form the signal peptide; sequence MQIKSFVLAASAAATASA. A glycan (N-linked (GlcNAc...) asparagine) is linked at asparagine 60.

This sequence belongs to the phiA family.

It is found in the secreted. Its subcellular location is the cell wall. Functionally, cell wall protein involved in development of asexual structures such as phialide and conidium development, and thus required for spore formation. Plays a role as a general stress protectant produced by the fungus in competition with antagonistic bacteria. The polypeptide is Cell wall protein phiA (Aspergillus fumigatus (strain CBS 144.89 / FGSC A1163 / CEA10) (Neosartorya fumigata)).